A 257-amino-acid polypeptide reads, in one-letter code: Snake venom serine protease BITS01A (257 aa).

A signal peptide spans methionine 1–alanine 18. A propeptide spanning residues glutamine 19–leucine 24 is cleaved from the precursor. The Peptidase S1 domain occupies valine 25–alanine 248. 6 disulfides stabilise this stretch: cysteine 31–cysteine 162, cysteine 49–cysteine 65, cysteine 97–cysteine 255, cysteine 141–cysteine 209, cysteine 173–cysteine 188, and cysteine 199–cysteine 224. Residue histidine 64 is the Charge relay system of the active site. Asparagine 101 is a glycosylation site (N-linked (GlcNAc...) asparagine). Residue aspartate 109 is the Charge relay system of the active site. Asparagine 121, asparagine 153, and asparagine 169 each carry an N-linked (GlcNAc...) asparagine glycan. Residue serine 203 is the Charge relay system of the active site. Residues asparagine 210 and asparagine 250 are each glycosylated (N-linked (GlcNAc...) asparagine).

It belongs to the peptidase S1 family. Snake venom subfamily. In terms of assembly, monomer. As to expression, expressed by the venom gland.

The protein localises to the secreted. Snake venom serine protease that may act in the hemostasis system of the prey. This Bothrops insularis (Golden lancehead) protein is Snake venom serine protease BITS01A.